The primary structure comprises 334 residues: D-fructose 1,6-bisphosphatase class 2/sedoheptulose 1,7-bisphosphatase (334 aa).

The Mn(2+) site is built by aspartate 33, glutamate 57, aspartate 85, and glutamate 88. Substrate-binding positions include 88 to 90 (EGT), tyrosine 119, 164 to 166 (RAR), and 186 to 188 (DGD). Position 213 (glutamate 213) interacts with Mn(2+).

The protein belongs to the FBPase class 2 family. As to quaternary structure, homotetramer. Mn(2+) is required as a cofactor.

It carries out the reaction beta-D-fructose 1,6-bisphosphate + H2O = beta-D-fructose 6-phosphate + phosphate. It catalyses the reaction D-sedoheptulose 1,7-bisphosphate + H2O = D-sedoheptulose 7-phosphate + phosphate. The protein operates within carbohydrate biosynthesis; Calvin cycle. Its function is as follows. Catalyzes the hydrolysis of fructose 1,6-bisphosphate (Fru 1,6-P2) and sedoheptulose 1,7-bisphosphate (Sed 1,7-P2) to fructose 6-phosphate and sedoheptulose 7-phosphate, respectively. The sequence is that of D-fructose 1,6-bisphosphatase class 2/sedoheptulose 1,7-bisphosphatase from Synechococcus sp. (strain CC9605).